The following is a 299-amino-acid chain: Recombination-associated protein RdgC (299 aa).

The protein belongs to the RdgC family.

It is found in the cytoplasm. It localises to the nucleoid. Functionally, may be involved in recombination. The polypeptide is Recombination-associated protein RdgC (Neisseria meningitidis serogroup C (strain 053442)).